Reading from the N-terminus, the 279-residue chain is Undecaprenyl-diphosphatase (279 aa).

6 helical membrane-spanning segments follow: residues 45–65 (FVEM…IVIY), 85–105 (WQLW…ALPF), 113–133 (FNFM…FIWV), 188–208 (SVAA…YSGL), 226–246 (LILL…IRFL), and 255–275 (FTIF…YWLV).

It belongs to the UppP family.

It is found in the cell membrane. The catalysed reaction is di-trans,octa-cis-undecaprenyl diphosphate + H2O = di-trans,octa-cis-undecaprenyl phosphate + phosphate + H(+). Its function is as follows. Catalyzes the dephosphorylation of undecaprenyl diphosphate (UPP). Confers resistance to bacitracin. This chain is Undecaprenyl-diphosphatase, found in Streptococcus agalactiae serotype III (strain NEM316).